A 159-amino-acid polypeptide reads, in one-letter code: Protein HydD (159 aa).

The protein belongs to the peptidase A31 family.

This is Protein HydD (hydD) from Wolinella succinogenes (strain ATCC 29543 / DSM 1740 / CCUG 13145 / JCM 31913 / LMG 7466 / NCTC 11488 / FDC 602W) (Vibrio succinogenes).